Reading from the N-terminus, the 156-residue chain is ATP synthase subunit b', chloroplastic (156 aa).

Residues 24-44 (ATLPLVAIQFILLMVTLNIIL) form a helical membrane-spanning segment.

This sequence belongs to the ATPase B chain family. F-type ATPases have 2 components, F(1) - the catalytic core - and F(0) - the membrane proton channel. F(1) has five subunits: alpha(3), beta(3), gamma(1), delta(1), epsilon(1). F(0) has four main subunits: a(1), b(1), b'(1) and c(10-14). The alpha and beta chains form an alternating ring which encloses part of the gamma chain. F(1) is attached to F(0) by a central stalk formed by the gamma and epsilon chains, while a peripheral stalk is formed by the delta, b and b' chains.

It is found in the plastid. The protein resides in the chloroplast thylakoid membrane. Its function is as follows. F(1)F(0) ATP synthase produces ATP from ADP in the presence of a proton or sodium gradient. F-type ATPases consist of two structural domains, F(1) containing the extramembraneous catalytic core and F(0) containing the membrane proton channel, linked together by a central stalk and a peripheral stalk. During catalysis, ATP synthesis in the catalytic domain of F(1) is coupled via a rotary mechanism of the central stalk subunits to proton translocation. In terms of biological role, component of the F(0) channel, it forms part of the peripheral stalk, linking F(1) to F(0). The b'-subunit is a diverged and duplicated form of b found in plants and photosynthetic bacteria. This chain is ATP synthase subunit b', chloroplastic, found in Thalassiosira pseudonana (Marine diatom).